The following is a 236-amino-acid chain: Probable ascorbate-specific transmembrane electron transporter 2 (236 aa).

Residues 1 to 11 (MAAGLGVKAAP) are Cytoplasmic-facing. The helical transmembrane segment at 12 to 32 (FTYVAHALAVAAAVMVLVWCI) threads the bilayer. One can recognise a Cytochrome b561 domain in the interval 15–219 (VAHALAVAAA…FGAAVVVAAV (205 aa)). The Extracellular segment spans residues 33-53 (SFRGGLAFEADNKNLIFNVHP). A heme b-binding site is contributed by histidine 52. A helical transmembrane segment spans residues 54 to 74 (VLMLIGYIILGSEAIMIYKIF). 67–75 (AIMIYKIFP) is a binding site for L-ascorbate. Residues 75–84 (PKLNHDTTKL) are Cytoplasmic-facing. Residues 85–105 (IHLILHAIAIVLGAVGIYCAF) form a helical membrane-spanning segment. 2 residues coordinate heme b: histidine 86 and histidine 120. At 106-122 (KFHNESGIANLYSLHSW) the chain is on the extracellular side. Residue 116–125 (LYSLHSWLGI) participates in monodehydro-L-ascorbate radical binding. Residues 123-143 (LGIGTISLYGIQWIFGFVAFF) traverse the membrane as a helical segment. Topologically, residues 144-153 (YPGAAPHVRR) are cytoplasmic. A helical membrane pass occupies residues 154-174 (GALPWHVLFGLFVYVLTLATA). Histidine 159 contacts heme b. The Extracellular portion of the chain corresponds to 175 to 196 (ELGLLEKLTFLQSSGLDKYGAE). A helical membrane pass occupies residues 197–217 (AFLVNFTGLVVALFGAAVVVA). At 218–236 (AVAPAHVEEPEGYAPIPVN) the chain is on the cytoplasmic side.

Heme b serves as cofactor.

It is found in the membrane. Two-heme-containing cytochrome. Catalyzes ascorbate-dependent trans-membrane electron transfer by utilizing a concerted H(+)/e(-) transfer mechanism. The sequence is that of Probable ascorbate-specific transmembrane electron transporter 2 from Oryza sativa subsp. japonica (Rice).